Here is a 147-residue protein sequence, read N- to C-terminus: MRTTPLAKSSEIERKWYIIDATDVSLGRLSAAVATILRGKNKPQYTPNVDCGDNVIVVNASKIKLTGKKASDKFYYHHSSWRGGLKAVSYGELLANNPVKMVEISVKGMLPKNTLGHQEFLKMHVYAGEDHKHEAQKPEKLDINKLI.

The protein belongs to the universal ribosomal protein uL13 family. Part of the 50S ribosomal subunit.

Its function is as follows. This protein is one of the early assembly proteins of the 50S ribosomal subunit, although it is not seen to bind rRNA by itself. It is important during the early stages of 50S assembly. The chain is Large ribosomal subunit protein uL13 from Lactobacillus acidophilus (strain ATCC 700396 / NCK56 / N2 / NCFM).